The following is a 200-amino-acid chain: Holliday junction branch migration complex subunit RuvA (200 aa).

Residues M1–R63 form a domain I region. The domain II stretch occupies residues T64–G142. The tract at residues D143–S153 is flexible linker. Positions S153–K200 are domain III.

The protein belongs to the RuvA family. As to quaternary structure, homotetramer. Forms an RuvA(8)-RuvB(12)-Holliday junction (HJ) complex. HJ DNA is sandwiched between 2 RuvA tetramers; dsDNA enters through RuvA and exits via RuvB. An RuvB hexamer assembles on each DNA strand where it exits the tetramer. Each RuvB hexamer is contacted by two RuvA subunits (via domain III) on 2 adjacent RuvB subunits; this complex drives branch migration. In the full resolvosome a probable DNA-RuvA(4)-RuvB(12)-RuvC(2) complex forms which resolves the HJ.

The protein resides in the cytoplasm. The RuvA-RuvB-RuvC complex processes Holliday junction (HJ) DNA during genetic recombination and DNA repair, while the RuvA-RuvB complex plays an important role in the rescue of blocked DNA replication forks via replication fork reversal (RFR). RuvA specifically binds to HJ cruciform DNA, conferring on it an open structure. The RuvB hexamer acts as an ATP-dependent pump, pulling dsDNA into and through the RuvAB complex. HJ branch migration allows RuvC to scan DNA until it finds its consensus sequence, where it cleaves and resolves the cruciform DNA. In Trichlorobacter lovleyi (strain ATCC BAA-1151 / DSM 17278 / SZ) (Geobacter lovleyi), this protein is Holliday junction branch migration complex subunit RuvA.